The following is a 160-amino-acid chain: Anaerobic nitrite reductase HBII (160 aa).

The region spanning Gly-8–Lys-157 is the Globin domain. The short motif at Glu-41–Ser-45 is the Homodimerization element. Heme b-binding residues include Ser-51, Lys-65, His-69, Lys-99, Ser-103, and His-104. The short motif at Asp-111–Glu-123 is the Homodimerization element.

This sequence belongs to the plant globin family. In terms of assembly, homodimer. Heme b is required as a cofactor.

It localises to the cytoplasm. Its subcellular location is the nucleus. The enzyme catalyses Fe(III)-heme b-[protein] + nitric oxide + H2O = Fe(II)-heme b-[protein] + nitrite + 2 H(+). Phytoglobin that reduces nitrite to nitric oxide (NO) under anoxic conditions (e.g. during flooding or in waterlogged soil) and upon root nodulation. Required for general plant development and during nodulation, especially for the onset of symbiosis. Monitors nitric oxide (NO) levels during early phase of the nitrogen-fixing symbiosis and buffers oxygen in functioning nodules. May not function as an oxygen storage or transport protein. Has an unusually high affinity for O(2) through a hexacoordinate heme iron because of a very low dissociation constant. This is Anaerobic nitrite reductase HBII from Casuarina glauca (Swamp oak).